The chain runs to 111 residues: Iron-sulfur cluster assembly protein CyaY (111 aa).

This sequence belongs to the frataxin family.

Involved in iron-sulfur (Fe-S) cluster assembly. May act as a regulator of Fe-S biogenesis. The sequence is that of Iron-sulfur cluster assembly protein CyaY from Cupriavidus pinatubonensis (strain JMP 134 / LMG 1197) (Cupriavidus necator (strain JMP 134)).